The chain runs to 245 residues: Large ribosomal subunit protein uL3 (245 aa).

At Q152 the chain carries N5-methylglutamine. The tract at residues 224–245 (RSKAVQAEAAAPAEAAAPEGDN) is disordered. Residues 230–245 (AEAAAPAEAAAPEGDN) are compositionally biased toward low complexity.

It belongs to the universal ribosomal protein uL3 family. As to quaternary structure, part of the 50S ribosomal subunit. Forms a cluster with proteins L14 and L19. In terms of processing, methylated by PrmB.

Its function is as follows. One of the primary rRNA binding proteins, it binds directly near the 3'-end of the 23S rRNA, where it nucleates assembly of the 50S subunit. This Paracoccus denitrificans (strain Pd 1222) protein is Large ribosomal subunit protein uL3.